Consider the following 352-residue polypeptide: UDP-N-acetylglucosamine--N-acetylmuramyl-(pentapeptide) pyrophosphoryl-undecaprenol N-acetylglucosamine transferase (352 aa).

Residues S195 and Q287 each coordinate UDP-N-acetyl-alpha-D-glucosamine.

Belongs to the glycosyltransferase 28 family. MurG subfamily.

It localises to the cell membrane. The catalysed reaction is Mur2Ac(oyl-L-Ala-gamma-D-Glu-L-Lys-D-Ala-D-Ala)-di-trans,octa-cis-undecaprenyl diphosphate + UDP-N-acetyl-alpha-D-glucosamine = beta-D-GlcNAc-(1-&gt;4)-Mur2Ac(oyl-L-Ala-gamma-D-Glu-L-Lys-D-Ala-D-Ala)-di-trans,octa-cis-undecaprenyl diphosphate + UDP + H(+). It participates in cell wall biogenesis; peptidoglycan biosynthesis. Functionally, cell wall formation. Catalyzes the transfer of a GlcNAc subunit on undecaprenyl-pyrophosphoryl-MurNAc-pentapeptide (lipid intermediate I) to form undecaprenyl-pyrophosphoryl-MurNAc-(pentapeptide)GlcNAc (lipid intermediate II). This chain is UDP-N-acetylglucosamine--N-acetylmuramyl-(pentapeptide) pyrophosphoryl-undecaprenol N-acetylglucosamine transferase, found in Streptococcus pneumoniae serotype 19F (strain G54).